A 117-amino-acid chain; its full sequence is Large ribosomal subunit protein uL22 (117 aa).

This sequence belongs to the universal ribosomal protein uL22 family. Part of the 50S ribosomal subunit.

In terms of biological role, this protein binds specifically to 23S rRNA; its binding is stimulated by other ribosomal proteins, e.g. L4, L17, and L20. It is important during the early stages of 50S assembly. It makes multiple contacts with different domains of the 23S rRNA in the assembled 50S subunit and ribosome. Functionally, the globular domain of the protein is located near the polypeptide exit tunnel on the outside of the subunit, while an extended beta-hairpin is found that lines the wall of the exit tunnel in the center of the 70S ribosome. The chain is Large ribosomal subunit protein uL22 from Chlorobium phaeobacteroides (strain BS1).